A 436-amino-acid polypeptide reads, in one-letter code: MTLPTVAIVGRPNVGKSTLFNRIAGERISIVEDVEGVTRDRIYTSAEWLNRQFSLIDTGGIDDVDAPFMEQIKHQAGIAMTEADVIVFVVSGKEGVTDADEYVARILYKTNKPVILAVNKVDNPEMRADIYDFYSLGLGDPYPVSSVHGIGTGDVLDAIVENLPTEVEEENPDIIRFSLIGRPNVGKSSLINAILGEDRVIASPIAGTTRDAIDTNFVDSEGQEYTMIDTAGMRKSGKVYENTEKYSVMRSMRAIDRSDVVLMVINAEEGIREYDKRIAGFAHEAGKGIIIVVNKWDTIKKDNHTVANWEADIRDQFQFLSYAPIVFVSAKTKQRLNKLPEMIKRISESQNRRISSAVLNDVIMDAIAINPTPTDKGKRLKIFYGTQVSVKPPTFVIFVNEEELMHFSYMRFLENQIRQAFGFEGTPIHLIARKRK.

2 EngA-type G domains span residues 4 to 167 and 175 to 351; these read PTVA…PTEV and IRFS…ESQN. GTP-binding positions include 10-17, 57-61, 119-122, 181-188, 229-233, and 294-297; these read GRPNVGKS, DTGGI, NKVD, DTAGM, and NKWD. The 85-residue stretch at 352–436 folds into the KH-like domain; sequence RRISSAVLND…PIHLIARKRK (85 aa).

The protein belongs to the TRAFAC class TrmE-Era-EngA-EngB-Septin-like GTPase superfamily. EngA (Der) GTPase family. As to quaternary structure, associates with the 50S ribosomal subunit.

Functionally, GTPase that plays an essential role in the late steps of ribosome biogenesis. The protein is GTPase Der of Streptococcus thermophilus (strain ATCC BAA-491 / LMD-9).